Reading from the N-terminus, the 476-residue chain is Aspartyl/glutamyl-tRNA(Asn/Gln) amidotransferase subunit B (476 aa).

It belongs to the GatB/GatE family. GatB subfamily. In terms of assembly, heterotrimer of A, B and C subunits.

It catalyses the reaction L-glutamyl-tRNA(Gln) + L-glutamine + ATP + H2O = L-glutaminyl-tRNA(Gln) + L-glutamate + ADP + phosphate + H(+). The catalysed reaction is L-aspartyl-tRNA(Asn) + L-glutamine + ATP + H2O = L-asparaginyl-tRNA(Asn) + L-glutamate + ADP + phosphate + 2 H(+). Its function is as follows. Allows the formation of correctly charged Asn-tRNA(Asn) or Gln-tRNA(Gln) through the transamidation of misacylated Asp-tRNA(Asn) or Glu-tRNA(Gln) in organisms which lack either or both of asparaginyl-tRNA or glutaminyl-tRNA synthetases. The reaction takes place in the presence of glutamine and ATP through an activated phospho-Asp-tRNA(Asn) or phospho-Glu-tRNA(Gln). In Lactobacillus acidophilus (strain ATCC 700396 / NCK56 / N2 / NCFM), this protein is Aspartyl/glutamyl-tRNA(Asn/Gln) amidotransferase subunit B.